The following is a 369-amino-acid chain: 2-aminoethylphosphonate--pyruvate transaminase (369 aa).

N6-(pyridoxal phosphate)lysine is present on lysine 193.

This sequence belongs to the class-V pyridoxal-phosphate-dependent aminotransferase family. PhnW subfamily. Homodimer. Pyridoxal 5'-phosphate is required as a cofactor.

The enzyme catalyses (2-aminoethyl)phosphonate + pyruvate = phosphonoacetaldehyde + L-alanine. In terms of biological role, involved in phosphonate degradation. The sequence is that of 2-aminoethylphosphonate--pyruvate transaminase from Burkholderia mallei (strain NCTC 10247).